A 283-amino-acid chain; its full sequence is uncharacterized protein (283 aa).

One can recognise an HTH araC/xylS-type domain in the interval 172-270; sequence EAIRDYIDER…ERSPSEYRRQ (99 aa). DNA-binding regions (H-T-H motif) lie at residues 189–210 and 237–260; these read ESVAQAFYISPNYLSHLFQKTG and VKEVAHACGFVDSNYFCRLFRKNT.

This is an uncharacterized protein from Escherichia coli (strain K12).